The primary structure comprises 323 residues: tRNA U34 carboxymethyltransferase (323 aa).

Residues Lys-91, Trp-105, Lys-110, Gly-130, 152 to 154 (DPS), 181 to 182 (IE), Met-196, Tyr-200, and Arg-315 each bind carboxy-S-adenosyl-L-methionine.

It belongs to the class I-like SAM-binding methyltransferase superfamily. CmoB family. Homotetramer.

It catalyses the reaction carboxy-S-adenosyl-L-methionine + 5-hydroxyuridine(34) in tRNA = 5-carboxymethoxyuridine(34) in tRNA + S-adenosyl-L-homocysteine + H(+). Catalyzes carboxymethyl transfer from carboxy-S-adenosyl-L-methionine (Cx-SAM) to 5-hydroxyuridine (ho5U) to form 5-carboxymethoxyuridine (cmo5U) at position 34 in tRNAs. The sequence is that of tRNA U34 carboxymethyltransferase from Vibrio cholerae serotype O1 (strain ATCC 39541 / Classical Ogawa 395 / O395).